The following is a 1037-amino-acid chain: Multidrug resistance protein MdtF (1037 aa).

The Cytoplasmic segment spans residues 1 to 9 (MANYFIDRP). The helical transmembrane segment at 10-28 (VFAWVLAIIMMLAGGLAIM) threads the bilayer. The Periplasmic segment spans residues 29-339 (NLPVAQYPQI…TPFIEISIQE (311 aa)). A helical transmembrane segment spans residues 340-359 (VFKTLVEAIILVFLVMYLFL). Over 360-365 (QNFRAT) the chain is Cytoplasmic. Residues 366–385 (IIPTIAVPVVILGTFAILSA) traverse the membrane as a helical segment. At 386 to 391 (VGFTIN) the chain is on the periplasmic side. The helical transmembrane segment at 392 to 413 (TLTMFGMVLAIGLLVDDAIVVV) threads the bilayer. Over 414-441 (ENVERVIAEDKLPPKEATHKSMGQIQRA) the chain is Cytoplasmic. A helical membrane pass occupies residues 442–460 (LVGIAVVLSAVFMPMAFMS). Over 461 to 473 (GATGEIYRQFSIT) the chain is Periplasmic. The chain crosses the membrane as a helical span at residues 474-496 (LISSMLLSVFVAMSLTPALCATI). Topologically, residues 497-536 (LKAAPEGGHKPNALFARFNTLFEKSTQHYTDSTRSLLRCT) are cytoplasmic. A helical transmembrane segment spans residues 537–555 (GRYMVVYLLICAGMAVLFL). At 556–870 (RTPTSFLPEE…SYQEALSSNQ (315 aa)) the chain is on the periplasmic side. A helical transmembrane segment spans residues 871 to 890 (APALYAISLVVVFLALAALY). The Cytoplasmic segment spans residues 891–896 (ESWSIP). Residues 897-916 (FSVMLVVPLGVVGALLATDL) traverse the membrane as a helical segment. The Periplasmic segment spans residues 917–922 (RGLSND). Residues 923–944 (VYFQVGLLTTIGLSAKNAILIV) form a helical membrane-spanning segment. The Cytoplasmic portion of the chain corresponds to 945–972 (EFAVEMMQKEGKTPIEAIIEAARMRLRP). A helical transmembrane segment spans residues 973-991 (ILMTSLAFILGVLPLVISH). Residues 992–1004 (GAGSGAQNAVGTG) lie on the Periplasmic side of the membrane. A helical membrane pass occupies residues 1005–1027 (VMGGMFAATVLAIYFVPVFFVVV). Residues 1028-1037 (EHLFARFKKA) lie on the Cytoplasmic side of the membrane.

This sequence belongs to the resistance-nodulation-cell division (RND) (TC 2.A.6) family. As to quaternary structure, homotrimer. Part of the tripartite efflux system MdtEF-TolC, which is composed of an inner membrane transporter, MdtF, a membrane fusion protein, MdtE, and an outer membrane component, TolC. The complex forms a large protein conduit and can translocate molecules across both the inner and outer membranes.

Its subcellular location is the cell inner membrane. In terms of biological role, part of the tripartite efflux system MdtEF-TolC, which confers resistance to compounds such as rhodamine 6G, erythromycin, doxorubicin, ethidium bromide, TPP, SDS, deoxycholate, crystal violet and benzalkonium. In Escherichia coli (strain K12), this protein is Multidrug resistance protein MdtF (mdtF).